Here is a 395-residue protein sequence, read N- to C-terminus: Dihydroorotate dehydrogenase (quinone), mitochondrial (395 aa).

The transit peptide at 1 to 10 (MAWRQLRKRA) directs the protein to the mitochondrion; not cleaved. Over 1–10 (MAWRQLRKRA) the chain is Mitochondrial matrix. A helical membrane pass occupies residues 11–30 (LDAAIILGGGGLLFTSYLTA). The Mitochondrial intermembrane segment spans residues 31-395 (TGDDHFYAEY…TDAIGVDHRR (365 aa)). FMN-binding positions include 95–99 (AGFDK) and Ser119. Lys99 contacts substrate. 144–148 (NRYGF) serves as a coordination point for substrate. 2 residues coordinate FMN: Asn180 and Asn211. 211–216 (NVSSPN) is a binding site for substrate. Catalysis depends on Ser214, which acts as the Nucleophile. The FMN site is built by Lys254 and Thr282. Substrate is bound at residue 283–284 (NT). FMN contacts are provided by residues Gly305, Gly334, and 355–356 (YT).

Belongs to the dihydroorotate dehydrogenase family. Type 2 subfamily. As to quaternary structure, monomer. FMN is required as a cofactor. In terms of processing, the uncleaved transit peptide is required for mitochondrial targeting and proper membrane integration.

Its subcellular location is the mitochondrion inner membrane. It catalyses the reaction (S)-dihydroorotate + a quinone = orotate + a quinol. Its pathway is pyrimidine metabolism; UMP biosynthesis via de novo pathway; orotate from (S)-dihydroorotate (quinone route): step 1/1. In terms of biological role, catalyzes the conversion of dihydroorotate to orotate with quinone as electron acceptor. Required for UMP biosynthesis via de novo pathway. The sequence is that of Dihydroorotate dehydrogenase (quinone), mitochondrial (Dhodh) from Mus musculus (Mouse).